The chain runs to 144 residues: Large ribosomal subunit protein uL15 (144 aa).

A compositionally biased stretch (polar residues) spans 1–12 (MRLNTLSPSLGS). Residues 1–51 (MRLNTLSPSLGSRKNHKRLGRGIGSGFGKTAGRGHKGQKSRSGGHVNRGFE) form a disordered region. Over residues 21-31 (RGIGSGFGKTA) the composition is skewed to gly residues.

Belongs to the universal ribosomal protein uL15 family. In terms of assembly, part of the 50S ribosomal subunit.

Binds to the 23S rRNA. The chain is Large ribosomal subunit protein uL15 from Buchnera aphidicola subsp. Schizaphis graminum (strain Sg).